Consider the following 487-residue polypeptide: Diacylglycerol kinase 4 (487 aa).

In terms of domain architecture, DAGKc spans 86–242 (TPEVPLMVFV…LDSWNILITM (157 aa)).

It belongs to the eukaryotic diacylglycerol kinase family. In terms of assembly, monomer. Highly expressed in pollen grains. Expressed in roots, hypocotyls, leaf vasculature, developing anthers and stigmas, and receptacles of siliques.

It is found in the endoplasmic reticulum. The protein localises to the cytoplasm. The protein resides in the cytosol. The enzyme catalyses a 1,2-diacyl-sn-glycerol + ATP = a 1,2-diacyl-sn-glycero-3-phosphate + ADP + H(+). Phosphorylates the second messenger diacylglycerol (DAG) to generate phosphatidic acid (PA), another important signaling molecule. PA is required for plant development and responses to abiotic stress and pathogen attack. May be involved in the accumulation of PA during cold stress. Involved in the regulation of PA and phosphatidylcholine biosynthesis in growing pollen tubes. Required for nitric oxide-dependent pollen tube growth and re-orientation responses. Functions together with DGK2 in male gametophyte development and biosynthesis of phosphatidylglycerol and phosphatidylinositol in the endoplasmic reticulum (ER). Involved in PA production for pollen grain growth, as well as leaf and root growth. Possesses guanylyl cyclase activity in vitro. The chain is Diacylglycerol kinase 4 from Arabidopsis thaliana (Mouse-ear cress).